Consider the following 253-residue polypeptide: uncharacterized protein (253 aa).

Positions 1–25 are cleaved as a signal peptide; sequence MRKKKFLSKVSFGSLFLLCGTVLSA. C26 carries N-palmitoyl cysteine lipidation. Residue C26 is the site of S-diacylglycerol cysteine attachment.

The protein belongs to the MG439/MG440 family.

Its subcellular location is the cell membrane. This is an uncharacterized protein from Mycoplasma pneumoniae (strain ATCC 29342 / M129 / Subtype 1) (Mycoplasmoides pneumoniae).